Reading from the N-terminus, the 317-residue chain is Putative 12-oxophytodienoate reductase 10 (317 aa).

FMN is bound at residue 26–28; the sequence is PVG. Position 117–120 (117–120) interacts with substrate; that stretch reads HGAN. Tyrosine 122 acts as the Proton donor in catalysis. Arginine 169 contributes to the FMN binding site. Substrate is bound at residue arginine 209. Residues glycine 244 and 265–266 each bind FMN; that span reads GR.

Belongs to the NADH:flavin oxidoreductase/NADH oxidase family. The cofactor is FMN.

In terms of biological role, putative oxophytodienoate reductase that may be involved in the biosynthesis or metabolism of oxylipin signaling molecules. This chain is Putative 12-oxophytodienoate reductase 10 (OPR10), found in Oryza sativa subsp. japonica (Rice).